The following is a 341-amino-acid chain: Solute carrier family 25 member 43 (341 aa).

Solcar repeat units follow at residues 11–101 (TGSQ…MDDL), 105–185 (SQWS…LLVY), and 200–298 (SHLQ…LYQN). Helical transmembrane passes span 16–36 (LLCA…LELA), 68–88 (LWKG…VQLA), 110–130 (IVTG…TDLI), 166–186 (GVSL…LVYM), 205–225 (FANV…FDTV), and 262–282 (VLGL…YFGV).

It belongs to the mitochondrial carrier (TC 2.A.29) family.

It localises to the mitochondrion inner membrane. The chain is Solute carrier family 25 member 43 (Slc25a43) from Mus musculus (Mouse).